We begin with the raw amino-acid sequence, 495 residues long: Mesoderm induction early response protein 1 (495 aa).

2 disordered regions span residues Met1 to Ser25 and Gly76 to Thr131. The segment covering Gly83 to Asn94 has biased composition (acidic residues). The segment covering Gln120 to Phe130 has biased composition (polar residues). The region spanning Lys171 to Val269 is the ELM2 domain. One can recognise an SANT domain in the interval Glu274–Arg326. Disordered stretches follow at residues Asp356–Ser397 and His416–Val495. Composition is skewed to polar residues over residues Thr387–Ser397 and Pro420–Glu440. A compositionally biased stretch (basic and acidic residues) spans Thr462–Gly476. Over residues Lys477–Val489 the composition is skewed to polar residues.

The protein localises to the nucleus. Its function is as follows. Transcriptional repressor regulating the expression of a number of genes. Probably functions through recruitment of histone deacetylases involved in chromatin silencing. This chain is Mesoderm induction early response protein 1 (mier1), found in Xenopus laevis (African clawed frog).